The following is a 288-amino-acid chain: MEILIAEHAGFCFGVKRAIEIAYEELNKQKDTRLYTLGEIIHNPQVVKDLEEKGVRVIEEEELEKLLKGDRLIIRSHGISKKLYEFLEQKGVEIIDVTCPFVKKVQNIVEEYYKKGYDIVIVGDKNHPEVIGVNGWCEDKAYIVNSVEEAENLPFFEKACAVSQTTLIEKHWEDILEVLKSKAKELVYFNTICNATQKRQEAADALSKKVDVMFVIGGKHSSNTQKLRKICEKNCKNTYHIERADEITFEMLKGHDIIGITAGASTPDYVIEEVIEKIKSLKGEDENE.

C12 serves as a coordination point for [4Fe-4S] cluster. Residues H42 and H77 each contribute to the (2E)-4-hydroxy-3-methylbut-2-enyl diphosphate site. Residues H42 and H77 each coordinate dimethylallyl diphosphate. Residues H42 and H77 each contribute to the isopentenyl diphosphate site. A [4Fe-4S] cluster-binding site is contributed by C99. A (2E)-4-hydroxy-3-methylbut-2-enyl diphosphate-binding site is contributed by H127. H127 contacts dimethylallyl diphosphate. H127 is an isopentenyl diphosphate binding site. E129 acts as the Proton donor in catalysis. (2E)-4-hydroxy-3-methylbut-2-enyl diphosphate is bound at residue T165. C193 provides a ligand contact to [4Fe-4S] cluster. S221, S222, N223, and S265 together coordinate (2E)-4-hydroxy-3-methylbut-2-enyl diphosphate. Dimethylallyl diphosphate-binding residues include S221, S222, N223, and S265. Positions 221, 222, 223, and 265 each coordinate isopentenyl diphosphate.

It belongs to the IspH family. It depends on [4Fe-4S] cluster as a cofactor.

It carries out the reaction isopentenyl diphosphate + 2 oxidized [2Fe-2S]-[ferredoxin] + H2O = (2E)-4-hydroxy-3-methylbut-2-enyl diphosphate + 2 reduced [2Fe-2S]-[ferredoxin] + 2 H(+). The catalysed reaction is dimethylallyl diphosphate + 2 oxidized [2Fe-2S]-[ferredoxin] + H2O = (2E)-4-hydroxy-3-methylbut-2-enyl diphosphate + 2 reduced [2Fe-2S]-[ferredoxin] + 2 H(+). The protein operates within isoprenoid biosynthesis; dimethylallyl diphosphate biosynthesis; dimethylallyl diphosphate from (2E)-4-hydroxy-3-methylbutenyl diphosphate: step 1/1. It participates in isoprenoid biosynthesis; isopentenyl diphosphate biosynthesis via DXP pathway; isopentenyl diphosphate from 1-deoxy-D-xylulose 5-phosphate: step 6/6. In terms of biological role, catalyzes the conversion of 1-hydroxy-2-methyl-2-(E)-butenyl 4-diphosphate (HMBPP) into a mixture of isopentenyl diphosphate (IPP) and dimethylallyl diphosphate (DMAPP). Acts in the terminal step of the DOXP/MEP pathway for isoprenoid precursor biosynthesis. This is 4-hydroxy-3-methylbut-2-enyl diphosphate reductase from Caldanaerobacter subterraneus subsp. tengcongensis (strain DSM 15242 / JCM 11007 / NBRC 100824 / MB4) (Thermoanaerobacter tengcongensis).